The sequence spans 168 residues: Small ribosomal subunit protein uS9 (168 aa).

Positions 1–11 (MAQNEELTTEA) are enriched in low complexity. Residues 1–36 (MAQNEELTTEAVEAEENPTSYTSESSAAEAAPKKER) form a disordered region.

This sequence belongs to the universal ribosomal protein uS9 family.

The polypeptide is Small ribosomal subunit protein uS9 (Pseudarthrobacter chlorophenolicus (strain ATCC 700700 / DSM 12829 / CIP 107037 / JCM 12360 / KCTC 9906 / NCIMB 13794 / A6) (Arthrobacter chlorophenolicus)).